A 91-amino-acid polypeptide reads, in one-letter code: Large ribosomal subunit protein bL31B-1 (91 aa).

It belongs to the bacterial ribosomal protein bL31 family. Type B subfamily. Part of the 50S ribosomal subunit.

In Streptomyces avermitilis (strain ATCC 31267 / DSM 46492 / JCM 5070 / NBRC 14893 / NCIMB 12804 / NRRL 8165 / MA-4680), this protein is Large ribosomal subunit protein bL31B-1.